Consider the following 188-residue polypeptide: Cytochrome b561 homolog 2 (188 aa).

The Cytoplasmic portion of the chain corresponds to 1–15 (MSFTNTPERYGVISA). A helical membrane pass occupies residues 16–36 (AFHWLSAIIVYGMFALGLWMV). Residues H18 and H52 each coordinate heme b. Residues 37–54 (TLSYYDGWYHKAPELHKS) lie on the Periplasmic side of the membrane. Residues 55–75 (IGILLMMGLVIRVLWRVISPP) traverse the membrane as a helical segment. The Cytoplasmic segment spans residues 76–91 (PGPLPSYSPMTRLAAR). Residues 92–112 (AGHLALYLLLFAIGISGYLIS) traverse the membrane as a helical segment. The Periplasmic portion of the chain corresponds to 113 to 143 (TADGKPISVFGWFDVPATLADAGAQADFAGA). The helical transmembrane segment at 144-164 (LHFWLAWSVVVLSVMHGFMAL) threads the bilayer. Positions 145 and 159 each coordinate heme b. Topologically, residues 165 to 188 (KHHFIDKDDTLKRMLGKSSSDYGV) are cytoplasmic.

The protein belongs to the cytochrome b561 family. Heme b serves as cofactor.

The protein resides in the cell inner membrane. The polypeptide is Cytochrome b561 homolog 2 (yceJ) (Escherichia coli (strain K12)).